The chain runs to 179 residues: Large ribosomal subunit protein uL5 (179 aa).

This sequence belongs to the universal ribosomal protein uL5 family. In terms of assembly, part of the 50S ribosomal subunit; part of the 5S rRNA/L5/L18/L25 subcomplex. Contacts the 5S rRNA and the P site tRNA. Forms a bridge to the 30S subunit in the 70S ribosome.

This is one of the proteins that bind and probably mediate the attachment of the 5S RNA into the large ribosomal subunit, where it forms part of the central protuberance. In the 70S ribosome it contacts protein S13 of the 30S subunit (bridge B1b), connecting the 2 subunits; this bridge is implicated in subunit movement. Contacts the P site tRNA; the 5S rRNA and some of its associated proteins might help stabilize positioning of ribosome-bound tRNAs. In Prochlorococcus marinus (strain SARG / CCMP1375 / SS120), this protein is Large ribosomal subunit protein uL5.